The chain runs to 278 residues: Large ribosomal subunit protein uL2c (278 aa).

2 disordered regions span residues 32–56 (SLTS…HRGG) and 203–256 (QSIG…PTIG). The span at 209–220 (GSKRWQGKRPKV) shows a compositional bias: basic residues.

Belongs to the universal ribosomal protein uL2 family. Part of the 50S ribosomal subunit.

It localises to the plastid. Its subcellular location is the chloroplast. The sequence is that of Large ribosomal subunit protein uL2c (rpl2) from Chara vulgaris (Common stonewort).